Here is a 417-residue protein sequence, read N- to C-terminus: CinA-like protein (417 aa).

This sequence belongs to the CinA family.

The sequence is that of CinA-like protein from Synechococcus sp. (strain RCC307).